The primary structure comprises 449 residues: Glucose-6-phosphate isomerase (449 aa).

Residue glutamate 291 is the Proton donor of the active site. Residues histidine 312 and lysine 426 contribute to the active site.

Belongs to the GPI family.

The protein localises to the cytoplasm. It carries out the reaction alpha-D-glucose 6-phosphate = beta-D-fructose 6-phosphate. The protein operates within carbohydrate biosynthesis; gluconeogenesis. It participates in carbohydrate degradation; glycolysis; D-glyceraldehyde 3-phosphate and glycerone phosphate from D-glucose: step 2/4. Functionally, catalyzes the reversible isomerization of glucose-6-phosphate to fructose-6-phosphate. The polypeptide is Glucose-6-phosphate isomerase (Streptococcus pyogenes serotype M18 (strain MGAS8232)).